A 149-amino-acid chain; its full sequence is Transcriptional repressor NrdR (149 aa).

A zinc finger lies at 3-34 (CPFCFAVDTKVIDSRLVGEGSSVRRRRQCLVC). The 91-residue stretch at 49 to 139 (PRVVKSNDVR…VYRSFEDIRE (91 aa)) folds into the ATP-cone domain.

Belongs to the NrdR family. Zn(2+) serves as cofactor.

In terms of biological role, negatively regulates transcription of bacterial ribonucleotide reductase nrd genes and operons by binding to NrdR-boxes. The sequence is that of Transcriptional repressor NrdR from Cronobacter sakazakii (strain ATCC BAA-894) (Enterobacter sakazakii).